The following is a 109-amino-acid chain: U-scoloptoxin(16)-Cw1a (109 aa).

Residues 1–21 form the signal peptide; it reads MNAVFIVFLSAILSYPHESFA.

Belongs to the scoloptoxin-16 family. In terms of processing, contains 4 disulfide bonds. As to expression, expressed by the venom gland.

It localises to the secreted. This is U-scoloptoxin(16)-Cw1a from Cormocephalus westwoodi (Westwood's green centipede).